The primary structure comprises 689 residues: Glycine--tRNA ligase beta subunit (689 aa).

Belongs to the class-II aminoacyl-tRNA synthetase family. Tetramer of two alpha and two beta subunits.

It is found in the cytoplasm. It carries out the reaction tRNA(Gly) + glycine + ATP = glycyl-tRNA(Gly) + AMP + diphosphate. The chain is Glycine--tRNA ligase beta subunit from Salmonella agona (strain SL483).